A 134-amino-acid chain; its full sequence is Fluoride-specific ion channel FluC (134 aa).

Helical transmembrane passes span 7-27 (LAVA…TIMA), 38-58 (GTLL…IVLV), 69-89 (LFLF…AAES), and 110-130 (VGSL…LLGH). The Na(+) site is built by Gly77 and Thr80.

Belongs to the fluoride channel Fluc/FEX (TC 1.A.43) family.

The protein localises to the cell inner membrane. It carries out the reaction fluoride(in) = fluoride(out). Na(+) is not transported, but it plays an essential structural role and its presence is essential for fluoride channel function. Its function is as follows. Fluoride-specific ion channel. Important for reducing fluoride concentration in the cell, thus reducing its toxicity. The sequence is that of Fluoride-specific ion channel FluC from Legionella pneumophila (strain Paris).